We begin with the raw amino-acid sequence, 108 residues long: Replication initiation control protein YabA (108 aa).

The Zn(2+) site is built by His82, Cys84, Cys98, and Cys101.

This sequence belongs to the YabA family. In terms of assembly, homotetramer. Interacts with both DnaA and DnaN, acting as a bridge between these two proteins. It depends on Zn(2+) as a cofactor.

It localises to the cytoplasm. The protein resides in the nucleoid. Functionally, involved in control of chromosome replication initiation. Inhibits the cooperative binding of DnaA to the oriC region, thus negatively regulating initiation of chromosome replication. Inhibits the ability of DnaA-ATP to form a helix on DNA; does not disassemble preformed DnaA-DNA helices. Decreases the residence time of DnaA on the chromosome at its binding sites (oriC, replication forks and promoter-binding sites). Tethers DnaA to the replication machinery via the DNA polymerase beta sliding clamp subunit (dnaN). Associates with oriC and other DnaA targets on the chromosome in a DnaA-dependent manner. In Streptococcus agalactiae serotype Ia (strain ATCC 27591 / A909 / CDC SS700), this protein is Replication initiation control protein YabA.